We begin with the raw amino-acid sequence, 771 residues long: Probable aconitate hydratase, mitochondrial (771 aa).

Substrate is bound by residues Gln-86 and 179–181; that span reads DSH. [4Fe-4S] cluster-binding residues include Cys-372, Cys-435, and Cys-438. Substrate contacts are provided by residues Arg-461, Arg-466, Arg-594, and 657–658; that span reads SR.

Belongs to the aconitase/IPM isomerase family. Monomer. It depends on [4Fe-4S] cluster as a cofactor.

It is found in the mitochondrion. The catalysed reaction is citrate = D-threo-isocitrate. It functions in the pathway carbohydrate metabolism; tricarboxylic acid cycle; isocitrate from oxaloacetate: step 2/2. Functionally, catalyzes the isomerization of citrate to isocitrate via cis-aconitate. In Dictyostelium discoideum (Social amoeba), this protein is Probable aconitate hydratase, mitochondrial (aco2).